The primary structure comprises 69 residues: MKFAIVIEKDEDGYYVVKVPSLPGCHTQAKSLDELMERVKEAIELYLEVKKNVEDGEFIGVQVVEVKTG.

Belongs to the UPF0150 family.

The polypeptide is UPF0150 protein AF_1072 (Archaeoglobus fulgidus (strain ATCC 49558 / DSM 4304 / JCM 9628 / NBRC 100126 / VC-16)).